Reading from the N-terminus, the 1195-residue chain is Probable beta-tubulin polyglutamylase (1195 aa).

Positions 1-110 (MSQKDIYNKY…QTEMTDNQNE (110 aa)) are disordered. 2 stretches are compositionally biased toward acidic residues: residues 17-27 (DQQEEDDDENQ) and 44-79 (QGED…EENN). Coiled-coil stretches lie at residues 59–103 (DEEQ…QQTE) and 144–260 (QDMD…QSEQ). A compositionally biased stretch (low complexity) spans 80–89 (QDQQNNSESN). Polar residues predominate over residues 90 to 110 (LQYDKTNQKNQQTEMTDNQNE). A disordered region spans residues 281-343 (PKNDVDQYTG…NKKEQAKKQQ (63 aa)). Residues 294-316 (DSGESDEEANNEDDDEDEDDESE) show a composition bias toward acidic residues. Over residues 322–334 (RKNKAQLLKKKNN) the composition is skewed to basic residues. The TTL domain maps to 350–703 (KQTLVLNVAD…TCKAKNEIIN (354 aa)). Residues 500–503 (QRYL), K513, and D515 each bind ATP. The segment at 674 to 756 (PLDSYIKKNT…GFERIFPMED (83 aa)) is c-MTBD region. The interval 783–862 (RNTKKVTEDP…ETIQCEDQEQ (80 aa)) is disordered. A compositionally biased stretch (polar residues) spans 825–849 (PNSQTTINKGIPGQNGQRPSSSQLN). Over residues 850–860 (EEGETIQCEDQ) the composition is skewed to acidic residues.

The protein resides in the cytoplasm. It is found in the cytoskeleton. Its subcellular location is the cell projection. The protein localises to the cilium. It localises to the cilium basal body. Probable tubulin polyglutamylase with a strong preference for beta-tubulin. In Tetrahymena thermophila (strain SB210), this protein is Probable beta-tubulin polyglutamylase (Ttll6a).